A 184-amino-acid chain; its full sequence is Large ribosomal subunit protein bL9 (184 aa).

The disordered stretch occupies residues 160-184 (LQNQKSEQQEAEQDANKEAADGDDS). Over residues 173–184 (DANKEAADGDDS) the composition is skewed to basic and acidic residues.

It belongs to the bacterial ribosomal protein bL9 family.

Its function is as follows. Binds to the 23S rRNA. This chain is Large ribosomal subunit protein bL9, found in Wolbachia sp. subsp. Drosophila simulans (strain wRi).